The chain runs to 205 residues: uncharacterized protein (205 aa).

A helical membrane pass occupies residues 5–27 (IIVLFIIHFIMINENVFIALLHY).

It to T.maritima TM1570.

The protein resides in the membrane. This is an uncharacterized protein from Aquifex aeolicus (strain VF5).